The primary structure comprises 531 residues: Zinc finger protein 703-B (531 aa).

Polar residues predominate over residues methionine 1 to threonine 10. 3 disordered regions span residues methionine 1–alanine 28, serine 88–isoleucine 249, and valine 295–alanine 318. 2 stretches are compositionally biased toward low complexity: residues threonine 19 to alanine 28 and arginine 113 to serine 122. Residues serine 171–glycine 180 show a composition bias toward polar residues. Residues cysteine 183–valine 198 show a composition bias toward basic and acidic residues. Positions asparagine 199–alanine 215 are enriched in polar residues. Positions serine 216–serine 227 are enriched in low complexity. Residues histidine 404–histidine 432 form a C2H2-type zinc finger.

The protein belongs to the Elbow/Noc family.

The protein localises to the nucleus. It localises to the cytoplasm. Its function is as follows. Transcriptional corepressor which does not bind directly to DNA and may regulate transcription through recruitment of histone deacetylases to gene promoters. Regulates cell adhesion, migration and proliferation. Involved in specification of the lateral neural plate border (NPB). May be required for segmental gene expression during hindbrain development. This is Zinc finger protein 703-B (znf703-b) from Xenopus laevis (African clawed frog).